A 159-amino-acid chain; its full sequence is Histone H1 (159 aa).

Disordered stretches follow at residues 1-31 (MAEK…ITEL), 80-99 (KGAE…KKEK), and 132-159 (AAKK…KKKS). Positions 10 to 22 (VTTKKPAATHRRR) are enriched in basic residues. Positions 12–102 (TKKPAATHRR…GEGKKEKEKA (91 aa)) constitute an H15 domain. Over residues 84–93 (CAGGQGTGVG) the composition is skewed to gly residues. Positions 134–148 (KKVKAAPKKAKKPVK) are enriched in basic residues. Residues 149–159 (KTTEKKEKKKS) show a composition bias toward basic and acidic residues.

It belongs to the histone H1/H5 family.

The protein localises to the nucleus. It localises to the chromosome. In terms of biological role, histones H1 are necessary for the condensation of nucleosome chains into higher-order structures. The protein is Histone H1 of Psammechinus miliaris (Green sea urchin).